Consider the following 427-residue polypeptide: Glutamate-1-semialdehyde 2,1-aminomutase (427 aa).

K267 carries the N6-(pyridoxal phosphate)lysine modification.

This sequence belongs to the class-III pyridoxal-phosphate-dependent aminotransferase family. HemL subfamily. Homodimer. The cofactor is pyridoxal 5'-phosphate.

The protein resides in the cytoplasm. The enzyme catalyses (S)-4-amino-5-oxopentanoate = 5-aminolevulinate. It functions in the pathway porphyrin-containing compound metabolism; protoporphyrin-IX biosynthesis; 5-aminolevulinate from L-glutamyl-tRNA(Glu): step 2/2. The polypeptide is Glutamate-1-semialdehyde 2,1-aminomutase (Geobacter sulfurreducens (strain ATCC 51573 / DSM 12127 / PCA)).